We begin with the raw amino-acid sequence, 227 residues long: Cytochrome c oxidase subunit 2 (227 aa).

The Mitochondrial intermembrane segment spans residues 1–14; that stretch reads MAYPFQLGLQDATS. The chain crosses the membrane as a helical span at residues 15 to 45; that stretch reads PIMEELLHFHDHTLMIVFLISSLVLYIISLM. The Mitochondrial matrix portion of the chain corresponds to 46–59; it reads LTTKLTHTSTMDAQ. A helical transmembrane segment spans residues 60-87; sequence EVETVWTILPAIILILIALPSLRILYMM. The Mitochondrial intermembrane portion of the chain corresponds to 88–227; the sequence is DEINNPSLTV…YFETWSAVMV (140 aa). Residues histidine 161, cysteine 196, glutamate 198, cysteine 200, histidine 204, and methionine 207 each coordinate Cu cation. Residue glutamate 198 participates in Mg(2+) binding. Tyrosine 218 carries the phosphotyrosine modification.

The protein belongs to the cytochrome c oxidase subunit 2 family. As to quaternary structure, component of the cytochrome c oxidase (complex IV, CIV), a multisubunit enzyme composed of 14 subunits. The complex is composed of a catalytic core of 3 subunits MT-CO1, MT-CO2 and MT-CO3, encoded in the mitochondrial DNA, and 11 supernumerary subunits COX4I, COX5A, COX5B, COX6A, COX6B, COX6C, COX7A, COX7B, COX7C, COX8 and NDUFA4, which are encoded in the nuclear genome. The complex exists as a monomer or a dimer and forms supercomplexes (SCs) in the inner mitochondrial membrane with NADH-ubiquinone oxidoreductase (complex I, CI) and ubiquinol-cytochrome c oxidoreductase (cytochrome b-c1 complex, complex III, CIII), resulting in different assemblies (supercomplex SCI(1)III(2)IV(1) and megacomplex MCI(2)III(2)IV(2)). Found in a complex with TMEM177, COA6, COX18, COX20, SCO1 and SCO2. Interacts with TMEM177 in a COX20-dependent manner. Interacts with COX20. Interacts with COX16. It depends on Cu cation as a cofactor.

The protein localises to the mitochondrion inner membrane. The catalysed reaction is 4 Fe(II)-[cytochrome c] + O2 + 8 H(+)(in) = 4 Fe(III)-[cytochrome c] + 2 H2O + 4 H(+)(out). Its function is as follows. Component of the cytochrome c oxidase, the last enzyme in the mitochondrial electron transport chain which drives oxidative phosphorylation. The respiratory chain contains 3 multisubunit complexes succinate dehydrogenase (complex II, CII), ubiquinol-cytochrome c oxidoreductase (cytochrome b-c1 complex, complex III, CIII) and cytochrome c oxidase (complex IV, CIV), that cooperate to transfer electrons derived from NADH and succinate to molecular oxygen, creating an electrochemical gradient over the inner membrane that drives transmembrane transport and the ATP synthase. Cytochrome c oxidase is the component of the respiratory chain that catalyzes the reduction of oxygen to water. Electrons originating from reduced cytochrome c in the intermembrane space (IMS) are transferred via the dinuclear copper A center (CU(A)) of subunit 2 and heme A of subunit 1 to the active site in subunit 1, a binuclear center (BNC) formed by heme A3 and copper B (CU(B)). The BNC reduces molecular oxygen to 2 water molecules using 4 electrons from cytochrome c in the IMS and 4 protons from the mitochondrial matrix. This chain is Cytochrome c oxidase subunit 2 (MT-CO2), found in Lycalopex vetulus (Hoary fox).